We begin with the raw amino-acid sequence, 265 residues long: Orotidine 5'-phosphate decarboxylase (265 aa).

Substrate contacts are provided by residues D37, 59-61 (KTH), 91-100 (DRKFADIGNT), Y217, and R236. K93 (proton donor) is an active-site residue.

It belongs to the OMP decarboxylase family.

It carries out the reaction orotidine 5'-phosphate + H(+) = UMP + CO2. It functions in the pathway pyrimidine metabolism; UMP biosynthesis via de novo pathway; UMP from orotate: step 2/2. This Saccharomycopsis fibuligera (Yeast) protein is Orotidine 5'-phosphate decarboxylase (URA3).